A 195-amino-acid chain; its full sequence is Interferon omega-1 (195 aa).

The signal sequence occupies residues 1-23; it reads MAFSVSSLMALVVISSSPVSSMS. Disulfide bonds link Cys24–Cys122 and Cys52–Cys162. Asn101 is a glycosylation site (N-linked (GlcNAc...) asparagine).

Belongs to the alpha/beta interferon family.

It is found in the secreted. This Equus caballus (Horse) protein is Interferon omega-1.